A 122-amino-acid chain; its full sequence is Large ribosomal subunit protein bL19 (122 aa).

It belongs to the bacterial ribosomal protein bL19 family.

Functionally, this protein is located at the 30S-50S ribosomal subunit interface and may play a role in the structure and function of the aminoacyl-tRNA binding site. In Prosthecochloris aestuarii (strain DSM 271 / SK 413), this protein is Large ribosomal subunit protein bL19.